The following is a 431-amino-acid chain: Histidine--tRNA ligase (431 aa).

This sequence belongs to the class-II aminoacyl-tRNA synthetase family. As to quaternary structure, homodimer.

Its subcellular location is the cytoplasm. The catalysed reaction is tRNA(His) + L-histidine + ATP = L-histidyl-tRNA(His) + AMP + diphosphate + H(+). The chain is Histidine--tRNA ligase from Neisseria meningitidis serogroup B (strain ATCC BAA-335 / MC58).